The sequence spans 101 residues: uncharacterized protein (101 aa).

It is found in the cytoplasm. This is an uncharacterized protein from Saccharomyces cerevisiae (strain ATCC 204508 / S288c) (Baker's yeast).